Consider the following 315-residue polypeptide: Ribose-phosphate pyrophosphokinase (315 aa).

Residues 37–39 (DGE) and 96–97 (RQ) each bind ATP. Mg(2+) is bound by residues His-131 and Asp-170. Lys-194 is an active-site residue. Residues Arg-196, Asp-220, and 224 to 228 (DTGGT) each bind D-ribose 5-phosphate.

The protein belongs to the ribose-phosphate pyrophosphokinase family. Class I subfamily. Homohexamer. The cofactor is Mg(2+).

It is found in the cytoplasm. It catalyses the reaction D-ribose 5-phosphate + ATP = 5-phospho-alpha-D-ribose 1-diphosphate + AMP + H(+). It functions in the pathway metabolic intermediate biosynthesis; 5-phospho-alpha-D-ribose 1-diphosphate biosynthesis; 5-phospho-alpha-D-ribose 1-diphosphate from D-ribose 5-phosphate (route I): step 1/1. Its function is as follows. Involved in the biosynthesis of the central metabolite phospho-alpha-D-ribosyl-1-pyrophosphate (PRPP) via the transfer of pyrophosphoryl group from ATP to 1-hydroxyl of ribose-5-phosphate (Rib-5-P). The sequence is that of Ribose-phosphate pyrophosphokinase from Buchnera aphidicola subsp. Acyrthosiphon pisum (strain APS) (Acyrthosiphon pisum symbiotic bacterium).